The following is a 326-amino-acid chain: Beta-ketoacyl-[acyl-carrier-protein] synthase III (326 aa).

Catalysis depends on residues Cys-120 and His-253. The interval 254 to 258 is ACP-binding; sequence QANIR. Asn-283 is a catalytic residue.

It belongs to the thiolase-like superfamily. FabH family. Homodimer.

It is found in the cytoplasm. It catalyses the reaction malonyl-[ACP] + acetyl-CoA + H(+) = 3-oxobutanoyl-[ACP] + CO2 + CoA. Its pathway is lipid metabolism; fatty acid biosynthesis. Catalyzes the condensation reaction of fatty acid synthesis by the addition to an acyl acceptor of two carbons from malonyl-ACP. Catalyzes the first condensation reaction which initiates fatty acid synthesis and may therefore play a role in governing the total rate of fatty acid production. Possesses both acetoacetyl-ACP synthase and acetyl transacylase activities. Its substrate specificity determines the biosynthesis of branched-chain and/or straight-chain of fatty acids. The chain is Beta-ketoacyl-[acyl-carrier-protein] synthase III from Cupriavidus pinatubonensis (strain JMP 134 / LMG 1197) (Cupriavidus necator (strain JMP 134)).